The sequence spans 86 residues: Small ribosomal subunit protein uS17 (86 aa).

It belongs to the universal ribosomal protein uS17 family. In terms of assembly, part of the 30S ribosomal subunit.

Its function is as follows. One of the primary rRNA binding proteins, it binds specifically to the 5'-end of 16S ribosomal RNA. This chain is Small ribosomal subunit protein uS17, found in Helicobacter pylori (strain P12).